The sequence spans 303 residues: Uricase (303 aa).

Active-site charge relay system residues include lysine 12 and threonine 60. Residues threonine 60, aspartate 61, phenylalanine 162, arginine 179, valine 234, glutamine 235, and asparagine 261 each contribute to the urate site. The active-site Charge relay system is histidine 263. Positions 301 to 303 (TKL) match the Microbody targeting signal motif.

It belongs to the uricase family.

The protein resides in the peroxisome. The enzyme catalyses urate + O2 + H2O = 5-hydroxyisourate + H2O2. Its pathway is purine metabolism; urate degradation; (S)-allantoin from urate: step 1/3. In terms of biological role, catalyzes the oxidation of uric acid to 5-hydroxyisourate, which is further processed to form (S)-allantoin. In Cyberlindnera jadinii (Torula yeast), this protein is Uricase.